The sequence spans 24 residues: Small ribosomal subunit protein uS5 (24 aa).

The protein belongs to the universal ribosomal protein uS5 family. Part of the 30S ribosomal subunit. Contacts proteins S4 and S8.

Functionally, with S4 and S12 plays an important role in translational accuracy. In terms of biological role, located at the back of the 30S subunit body where it stabilizes the conformation of the head with respect to the body. The protein is Small ribosomal subunit protein uS5 (rpsE) of Vibrio proteolyticus (Aeromonas proteolytica).